A 292-amino-acid chain; its full sequence is Small ribosomal subunit biogenesis GTPase RsgA (292 aa).

The 159-residue stretch at 65–223 (KTELIRPTVA…VVDTPGFSSL (159 aa)) folds into the CP-type G domain. GTP-binding positions include 114 to 117 (NKLD) and 165 to 173 (GPSGVGKST). Residues cysteine 247, cysteine 252, histidine 254, and cysteine 260 each contribute to the Zn(2+) site.

It belongs to the TRAFAC class YlqF/YawG GTPase family. RsgA subfamily. In terms of assembly, monomer. Associates with 30S ribosomal subunit, binds 16S rRNA. Zn(2+) is required as a cofactor.

The protein localises to the cytoplasm. In terms of biological role, one of several proteins that assist in the late maturation steps of the functional core of the 30S ribosomal subunit. Helps release RbfA from mature subunits. May play a role in the assembly of ribosomal proteins into the subunit. Circularly permuted GTPase that catalyzes slow GTP hydrolysis, GTPase activity is stimulated by the 30S ribosomal subunit. This chain is Small ribosomal subunit biogenesis GTPase RsgA, found in Alkaliphilus metalliredigens (strain QYMF).